Here is a 273-residue protein sequence, read N- to C-terminus: Lactose transport system permease protein LacG (273 aa).

A run of 6 helical transmembrane segments spans residues 15 to 35 (YSVL…MVIG), 77 to 97 (IALV…YGFE), 110 to 130 (VILL…FMLM), 134 to 154 (GLLN…FIIF), 182 to 204 (FFYI…VFML), and 240 to 260 (GTVM…FFAM). Residues 71–260 (FWNSVKIALV…LPTLLVFFAM (190 aa)) enclose the ABC transmembrane type-1 domain.

It belongs to the binding-protein-dependent transport system permease family. MalFG subfamily.

The protein resides in the cell inner membrane. Part of the binding-protein-dependent transport system for lactose. Probably responsible for the translocation of the substrate across the membrane. The chain is Lactose transport system permease protein LacG (lacG) from Rhizobium radiobacter (Agrobacterium tumefaciens).